Here is a 129-residue protein sequence, read N- to C-terminus: Azurin-1 (129 aa).

The Plastocyanin-like domain occupies 1-129 (AECSVDIAGN…LMKGVLKLVD (129 aa)). An intrachain disulfide couples Cys3 to Cys26. The Cu cation site is built by His46, Cys112, His117, and Met121.

It localises to the periplasm. Functionally, transfers electrons from cytochrome c551 to cytochrome oxidase. This is Azurin-1 from Alcaligenes xylosoxydans xylosoxydans (Achromobacter xylosoxidans).